A 277-amino-acid polypeptide reads, in one-letter code: Large ribosomal subunit protein uL2cz/uL2cy (277 aa).

Disordered stretches follow at residues 1–31 (MAIH…NTRK) and 227–277 (NPVD…RRSK).

Belongs to the universal ribosomal protein uL2 family. As to quaternary structure, part of the 50S ribosomal subunit.

The protein localises to the plastid. The protein resides in the chloroplast. This Manihot esculenta (Cassava) protein is Large ribosomal subunit protein uL2cz/uL2cy (rpl2-A).